Here is a 486-residue protein sequence, read N- to C-terminus: Zinc transporter 6 (486 aa).

The Cytoplasmic portion of the chain corresponds to 1-60 (MVALDVLGITDSDAPVYRQKQEADTLVLGTIHPFRKAHRSVLGKLAQEFRLVTSDRRSWK). The helical transmembrane segment at 61–81 (ILLFGVLNVVCTGCLLMWCSS) threads the bilayer. Residues 82–91 (TNSMALTAYT) are Extracellular-facing. A helical transmembrane segment spans residues 92-112 (YLTIFDLFSLITCLLSLWVTM). Topologically, residues 113–125 (KKPSQIYSFGFQR) are cytoplasmic. Residues 126 to 146 (FEVLAVFSSTVLVQLGSLFIL) form a helical membrane-spanning segment. The Extracellular segment spans residues 147-161 (KESVERFVEQPEVHT). A helical membrane pass occupies residues 162 to 182 (GRLLVGTFVALFFNLLTLLSV). At 183–227 (KNKPFVFVSEAASTSWLQEHVADLSRSLCGLIPALSSFLLPRMNP) the chain is on the cytoplasmic side. Residues 228-248 (FVLINLAGAFALGITYMLIEI) traverse the membrane as a helical segment. Residues 249 to 255 (NNYNAMD) are Extracellular-facing. The helical transmembrane segment at 256 to 276 (TASAVAIALMTFGTMYPMSVY) threads the bilayer. The Cytoplasmic portion of the chain corresponds to 277–486 (SGKVLLQTTP…SGTYTGPPRP (210 aa)). Over residues 394–411 (PSRAQGSEPTPATSTPAK) the composition is skewed to low complexity. A disordered region spans residues 394 to 425 (PSRAQGSEPTPATSTPAKPSSPPPEFSFHTPG).

It belongs to the cation diffusion facilitator (CDF) transporter (TC 2.A.4) family. SLC30A subfamily. In terms of assembly, heterodimer with SLC30A5; form a functional zinc ion transmembrane transporter.

The protein resides in the golgi apparatus. It localises to the trans-Golgi network membrane. Its function is as follows. Has probably no intrinsic transporter activity but together with SLC30A5 forms a functional zinc ion:proton antiporter heterodimer, mediating zinc entry into the lumen of organelles along the secretory pathway. As part of that zinc ion:proton antiporter, contributes to zinc ion homeostasis within the early secretory pathway and regulates the activation and folding of enzymes like alkaline phosphatases and enzymes involved in phosphatidylinositol glycan anchor biosynthesis. The protein is Zinc transporter 6 (slc30a6) of Danio rerio (Zebrafish).